The primary structure comprises 424 residues: Microcin H47 secretion protein MchE (424 aa).

At 1–25 (MFRQDALENRKMKWQGRAILLPGIP) the chain is on the cytoplasmic side. The chain crosses the membrane as a helical span at residues 26–46 (LWLIMLGSIVFITAFLMFIIV). The Periplasmic segment spans residues 47-424 (GTYSRRVNVS…KHSATGPLND (378 aa)).

The protein belongs to the membrane fusion protein (MFP) (TC 8.A.1) family.

It is found in the cell inner membrane. Functionally, probably involved, in conjunction with MchF, in the secretion of microcin H47. The chain is Microcin H47 secretion protein MchE (mchE) from Escherichia coli.